Consider the following 42-residue polypeptide: Photosystem II reaction center protein J (42 aa).

The chain crosses the membrane as a helical span at residues 10 to 30; sequence IPLWIIGTLAGTLVIGLLAIF.

Belongs to the PsbJ family. PSII is composed of 1 copy each of membrane proteins PsbA, PsbB, PsbC, PsbD, PsbE, PsbF, PsbH, PsbI, PsbJ, PsbK, PsbL, PsbM, PsbT, PsbX, PsbY, PsbZ, Psb30/Ycf12, at least 3 peripheral proteins of the oxygen-evolving complex and a large number of cofactors. It forms dimeric complexes.

It is found in the plastid. Its subcellular location is the chloroplast thylakoid membrane. Functionally, one of the components of the core complex of photosystem II (PSII). PSII is a light-driven water:plastoquinone oxidoreductase that uses light energy to abstract electrons from H(2)O, generating O(2) and a proton gradient subsequently used for ATP formation. It consists of a core antenna complex that captures photons, and an electron transfer chain that converts photonic excitation into a charge separation. The chain is Photosystem II reaction center protein J from Chaetosphaeridium globosum (Charophycean green alga).